Reading from the N-terminus, the 454-residue chain is N-acetyl-S-(2-succino)cysteine lyase (454 aa).

Fumarate is bound at residue Thr-106 to Thr-107. His-154 serves as the catalytic Proton donor/acceptor. Arg-233 lines the fumarate pocket. The active-site Proton donor/acceptor is the Ser-277. Fumarate contacts are provided by residues Thr-278 and Lys-283–Asn-285.

This sequence belongs to the lyase 1 family.

It carries out the reaction N-acetyl-S-(2-succino)-L-cysteine = N-acetyl-L-cysteine + fumarate. It functions in the pathway amino-acid biosynthesis; L-cysteine biosynthesis. In terms of biological role, catalyzes the cleavage of N-acetyl-S-(2-succino)cysteine into fumarate and N-acetylcysteine. Is involved in a S-(2-succino)cysteine (2SC) degradation pathway that allows the bacterium to recover cysteine from 2SC and to detoxify 2SC that may be a toxic metabolite. Can also perform the reverse reaction in vitro, and has minor activity against 2SC and other small molecule thiols. The protein is N-acetyl-S-(2-succino)cysteine lyase of Dickeya dadantii (strain 3937) (Erwinia chrysanthemi (strain 3937)).